Here is a 250-residue protein sequence, read N- to C-terminus: 3-deoxy-manno-octulosonate cytidylyltransferase (250 aa).

Belongs to the KdsB family.

It localises to the cytoplasm. The catalysed reaction is 3-deoxy-alpha-D-manno-oct-2-ulosonate + CTP = CMP-3-deoxy-beta-D-manno-octulosonate + diphosphate. The protein operates within nucleotide-sugar biosynthesis; CMP-3-deoxy-D-manno-octulosonate biosynthesis; CMP-3-deoxy-D-manno-octulosonate from 3-deoxy-D-manno-octulosonate and CTP: step 1/1. It participates in bacterial outer membrane biogenesis; lipopolysaccharide biosynthesis. Activates KDO (a required 8-carbon sugar) for incorporation into bacterial lipopolysaccharide in Gram-negative bacteria. In Legionella pneumophila (strain Corby), this protein is 3-deoxy-manno-octulosonate cytidylyltransferase.